Here is a 381-residue protein sequence, read N- to C-terminus: DNA primase DnaG (381 aa).

Residues 173–259 (DAILVVEGRS…EVEDLEKDEI (87 aa)) enclose the Toprim domain. Mg(2+) is bound by residues Glu-179, Asp-221, and Asp-223.

The protein belongs to the archaeal DnaG primase family. Forms a ternary complex with MCM helicase and DNA. Component of the archaeal exosome complex. Mg(2+) serves as cofactor.

It carries out the reaction ssDNA + n NTP = ssDNA/pppN(pN)n-1 hybrid + (n-1) diphosphate.. Its function is as follows. RNA polymerase that catalyzes the synthesis of short RNA molecules used as primers for DNA polymerase during DNA replication. Also part of the exosome, which is a complex involved in RNA degradation. Acts as a poly(A)-binding protein that enhances the interaction between heteromeric, adenine-rich transcripts and the exosome. This chain is DNA primase DnaG, found in Methanothermobacter thermautotrophicus (strain ATCC 29096 / DSM 1053 / JCM 10044 / NBRC 100330 / Delta H) (Methanobacterium thermoautotrophicum).